A 448-amino-acid chain; its full sequence is Omega-6 fatty acid desaturase, chloroplastic (448 aa).

The N-terminal 69 residues, 1–69, are a transit peptide targeting the chloroplast; it reads MASRIADSLF…VKRRIGCIKA (69 aa). At Val-70 the chain carries N-acetylvaline. Transmembrane regions (helical) follow at residues 124–144 and 149–169; these read LKAL…LFMI and WYLL…FFVI. The Histidine box-1 signature appears at 171 to 175; the sequence is HDCAH. Positions 207–211 match the Histidine box-2 motif; that stretch reads HDRHH. Helical transmembrane passes span 282–302 and 303–323; these read VFAF…ILGW and VKFW…FTMV. The Histidine box-3 motif lies at 367–371; sequence HIPHH.

It belongs to the fatty acid desaturase type 1 family.

Its subcellular location is the plastid. The protein resides in the chloroplast inner membrane. The catalysed reaction is a (9Z)-octadecenoyl-containing glycerolipid + 2 reduced [2Fe-2S]-[ferredoxin] + O2 + 2 H(+) = a (9Z,12Z)-octadecadienoyl-containing glycerolipid + 2 oxidized [2Fe-2S]-[ferredoxin] + 2 H2O. The protein operates within lipid metabolism; polyunsaturated fatty acid biosynthesis. In terms of biological role, chloroplast omega-6 fatty acid desaturase introduces the second double bond in the biosynthesis of 16:3 and 18:3 fatty acids, important constituents of plant membranes. It is thought to use ferredoxin as an electron donor and to act on fatty acids esterified to galactolipids, sulfolipids and phosphatidylglycerol. The polypeptide is Omega-6 fatty acid desaturase, chloroplastic (Arabidopsis thaliana (Mouse-ear cress)).